A 1799-amino-acid chain; its full sequence is 1,3-beta-glucan synthase component FKS1 (1799 aa).

The span at 1–11 (MSYPNPPPPPK) shows a compositional bias: pro residues. A disordered region spans residues 1–136 (MSYPNPPPPP…SNAGHRPRDP (136 aa)). Low complexity predominate over residues 12 to 23 (GSASFSSSSSDP). The span at 51-64 (GAGGAGVAPPGQGG) shows a compositional bias: gly residues. The span at 91-101 (ASESGWSQNEP) shows a compositional bias: polar residues. The next 16 helical transmembrane spans lie at 431–451 (IWVLHISVFWFFTAYNAPSIY), 470–490 (LGGFVATLIMIAATLAEFSYI), 504–524 (LIFLLIILAITGGPSIYIAFF), 530–550 (VALILGIVQFFCSVVATIAFA), 591–611 (FLLWFLVFGCKFTESYFFLTL), 648–668 (VMFVMDLTLFFLDTFLWYVIW), 1268–1288 (NILVMMSVQVFMLALVFLGTL), 1323–1343 (CIISIFIVFWIAFVPLFVQEL), 1422–1442 (LVLLLFITLTVWVPHLIYFWI), 1446–1466 (GLCVAPFLFNPHQFAIADFII), 1527–1547 (IGEIIGPICLAILFVICYLFI), 1563–1583 (IAIIALGPIVWNMALLITLFL), 1605–1625 (ALAHFGAVAGMLVFFELLWFL), 1635–1655 (LGIIAVISVQRCIFKFLIAVF), 1704–1724 (DFIACHLLLALLTIPMFIPYF), and 1762–1782 (GLLYLIIQGIFIALIVVPIIF).

Belongs to the glycosyltransferase 48 family. As to quaternary structure, component of the 1,3-beta-glucan synthase (GS) complex composed of a catalytic subunit FKS1 and a regulatory subunit RHO1.

Its subcellular location is the cell membrane. The enzyme catalyses [(1-&gt;3)-beta-D-glucosyl](n) + UDP-alpha-D-glucose = [(1-&gt;3)-beta-D-glucosyl](n+1) + UDP + H(+). With respect to regulation, activated by magnesium ions. Inhibited by caspofungin and cilofungin. In terms of biological role, catalytic subunit of the 1,3-beta-glucan synthase (GS) complex. Synthesizes 1,3-beta-glucan, a major structural component of the yeast cell wall. Involved in cell wall synthesis, maintenance and remodeling. This chain is 1,3-beta-glucan synthase component FKS1, found in Cryptococcus neoformans var. grubii serotype A (strain H99 / ATCC 208821 / CBS 10515 / FGSC 9487) (Filobasidiella neoformans var. grubii).